Reading from the N-terminus, the 504-residue chain is Transcription factor NDT80 (504 aa).

Disordered regions lie at residues 64–172 (MHFN…QHHM), 283–310 (NGFP…NQHA), and 477–504 (RGRS…TPPQ). 4 stretches are compositionally biased toward low complexity: residues 73–87 (QQQQ…QQQQ), 103–145 (QGPT…ARQP), 153–172 (QQAQ…QHHM), and 292–301 (HPQNQPQNHP). The segment at residues 160–488 (QADAQSQAQQ…RSPSSYHKDR (329 aa)) is a DNA-binding region (NDT80).

It is found in the nucleus. In terms of biological role, meiosis-specific transcription factor that binds to the middle sporulation element (MSE) of targeted genes corresponding to the consensus sequence 5'-ACACAAA-3'. Acts as an activator of CDR1 induction by antifungal drugs. Modulates azole sensitivity by controlling the expression of ergosterol biosynthesis genes. Required for hyphal growth in response to different filament-inducing cues and for the proper expression of genes characterizing the filamentous transcriptional program including noteworthy genes encoding cell wall components, such as HWP1, ECE1, RBT4, and ALS3. Is essential for the completion of cell separation through the direct transcriptional regulation of genes encoding the chitinase CHT3 and the cell wall glucosidase SUN41. Required for biofilm formation and plays a key role in microcolony formation under both flow and static conditions and to epithelial surfaces. Essential for virulence. The protein is Transcription factor NDT80 of Candida albicans (strain SC5314 / ATCC MYA-2876) (Yeast).